The sequence spans 570 residues: Vacuolar protein sorting-associated protein 45 (570 aa).

Serine 307 and serine 441 each carry phosphoserine.

This sequence belongs to the STXBP/unc-18/SEC1 family. Interacts with STX6. Interacts with ZFYVE20. In terms of tissue distribution, ubiquitous. Expression was highest in testis, heart and brain, intermediate in kidney, spleen, prostate, ovary, small intestine and thymus and low in lung, skeletal muscle, placenta, colon, pancreas, peripheral blood leukocytes and liver.

Its subcellular location is the golgi apparatus membrane. It localises to the endosome membrane. May play a role in vesicle-mediated protein trafficking from the Golgi stack through the trans-Golgi network. This chain is Vacuolar protein sorting-associated protein 45 (VPS45), found in Homo sapiens (Human).